We begin with the raw amino-acid sequence, 175 residues long: O-acetyl-ADP-ribose deacetylase (175 aa).

Positions 1–175 (MAVQPEVILG…IYRRLLASYP (175 aa)) constitute a Macro domain. Substrate contacts are provided by residues 11-12 (DI), N25, 33-35 (GVD), and 122-126 (STGVY). D35 acts as the Proton acceptor in catalysis.

This sequence belongs to the MacroD-type family. YmdB subfamily. Homodimer. Interacts with RNase III.

It carries out the reaction 3''-O-acetyl-ADP-D-ribose + H2O = ADP-D-ribose + acetate + H(+). The enzyme catalyses 2''-O-acetyl-ADP-D-ribose + H2O = ADP-D-ribose + acetate + H(+). In terms of biological role, deacetylates O-acetyl-ADP ribose to yield ADP-ribose and free acetate. Down-regulates ribonuclease 3 (RNase III) activity. Acts by interacting directly with the region of the ribonuclease that is required for dimerization/activation. The sequence is that of O-acetyl-ADP-ribose deacetylase from Klebsiella pneumoniae (strain 342).